Reading from the N-terminus, the 600-residue chain is Adenine deaminase 3 (600 aa).

This sequence belongs to the metallo-dependent hydrolases superfamily. Adenine deaminase family. Mn(2+) is required as a cofactor.

It catalyses the reaction adenine + H2O + H(+) = hypoxanthine + NH4(+). This chain is Adenine deaminase 3, found in Rhizobium johnstonii (strain DSM 114642 / LMG 32736 / 3841) (Rhizobium leguminosarum bv. viciae).